The primary structure comprises 210 residues: Homeobox protein Rhox5 (210 aa).

Residues 29-117 (KAEAFLQAGE…KNGKPEDRQM (89 aa)) form a disordered region. The segment at residues 117–175 (MPLQGSRFAQQRLSELQSILQRTNSFDVPREDLYRLMDTCVARVQNWFKIRRAAARRNR) is a DNA-binding region (homeobox; atypical).

Its subcellular location is the nucleus. Transcription factor required for differentiation of embryonic stem cells (ESCs) into primordial germ cells. The sequence is that of Homeobox protein Rhox5 (Rhox5) from Mus minutoides (Southern African pygmy mouse).